A 482-amino-acid polypeptide reads, in one-letter code: Glycogen synthase (482 aa).

Residue Lys21 participates in ADP-alpha-D-glucose binding.

This sequence belongs to the glycosyltransferase 1 family. Bacterial/plant glycogen synthase subfamily.

The enzyme catalyses [(1-&gt;4)-alpha-D-glucosyl](n) + ADP-alpha-D-glucose = [(1-&gt;4)-alpha-D-glucosyl](n+1) + ADP + H(+). The protein operates within glycan biosynthesis; glycogen biosynthesis. Functionally, synthesizes alpha-1,4-glucan chains using ADP-glucose. This Clostridium perfringens (strain 13 / Type A) protein is Glycogen synthase.